We begin with the raw amino-acid sequence, 311 residues long: Porphobilinogen deaminase (311 aa).

Residue cysteine 243 is modified to S-(dipyrrolylmethanemethyl)cysteine.

This sequence belongs to the HMBS family. In terms of assembly, monomer. Requires dipyrromethane as cofactor.

It catalyses the reaction 4 porphobilinogen + H2O = hydroxymethylbilane + 4 NH4(+). Its pathway is porphyrin-containing compound metabolism; protoporphyrin-IX biosynthesis; coproporphyrinogen-III from 5-aminolevulinate: step 2/4. In terms of biological role, tetrapolymerization of the monopyrrole PBG into the hydroxymethylbilane pre-uroporphyrinogen in several discrete steps. The polypeptide is Porphobilinogen deaminase (Blochmanniella floridana).